Here is a 425-residue protein sequence, read N- to C-terminus: Serine--tRNA ligase (425 aa).

Residue 230–232 (TAE) participates in L-serine binding. Position 261 to 263 (261 to 263 (RSE)) interacts with ATP. E284 is an L-serine binding site. 348-351 (EISS) lines the ATP pocket. S384 is a binding site for L-serine.

It belongs to the class-II aminoacyl-tRNA synthetase family. Type-1 seryl-tRNA synthetase subfamily. As to quaternary structure, homodimer. The tRNA molecule binds across the dimer.

It localises to the cytoplasm. It catalyses the reaction tRNA(Ser) + L-serine + ATP = L-seryl-tRNA(Ser) + AMP + diphosphate + H(+). The enzyme catalyses tRNA(Sec) + L-serine + ATP = L-seryl-tRNA(Sec) + AMP + diphosphate + H(+). It functions in the pathway aminoacyl-tRNA biosynthesis; selenocysteinyl-tRNA(Sec) biosynthesis; L-seryl-tRNA(Sec) from L-serine and tRNA(Sec): step 1/1. Catalyzes the attachment of serine to tRNA(Ser). Is also able to aminoacylate tRNA(Sec) with serine, to form the misacylated tRNA L-seryl-tRNA(Sec), which will be further converted into selenocysteinyl-tRNA(Sec). The sequence is that of Serine--tRNA ligase from Streptococcus gordonii (strain Challis / ATCC 35105 / BCRC 15272 / CH1 / DL1 / V288).